The following is a 300-amino-acid chain: Putative zinc finger protein 705EP (300 aa).

Positions valine 7–proline 78 constitute a KRAB domain. The segment at tyrosine 172 to histidine 194 adopts a C2H2-type 1; degenerate zinc-finger fold. 2 consecutive C2H2-type zinc fingers follow at residues tyrosine 200 to histidine 222 and tyrosine 228 to histidine 250. Residues tyrosine 256–histidine 278 form a C2H2-type 4; degenerate zinc finger.

This sequence belongs to the krueppel C2H2-type zinc-finger protein family.

The protein localises to the nucleus. Its function is as follows. May be involved in transcriptional regulation. The protein is Putative zinc finger protein 705EP of Homo sapiens (Human).